The following is a 182-amino-acid chain: MHLIVGLGNPGSQYELTYHNIGFIIVDAICKHWNFQSFSKKADCLITSSVINDNKIMLMKPYSFMNNSGIPVARIRNFYKFSLDNVIVIHDDADLEPGRIKIKKGGGSAGHNGLKSIDSSIGNDYWRLRFGIGRSDSQRSLADYVLSKFSNLDDVIPLVERIAQNIHLMLQGNNIAFTNSIV.

TRNA is bound at residue Tyr14. His19 (proton acceptor) is an active-site residue. Phe64, Asn66, and Asn112 together coordinate tRNA.

This sequence belongs to the PTH family. Monomer.

Its subcellular location is the cytoplasm. It carries out the reaction an N-acyl-L-alpha-aminoacyl-tRNA + H2O = an N-acyl-L-amino acid + a tRNA + H(+). Functionally, hydrolyzes ribosome-free peptidyl-tRNAs (with 1 or more amino acids incorporated), which drop off the ribosome during protein synthesis, or as a result of ribosome stalling. Its function is as follows. Catalyzes the release of premature peptidyl moieties from peptidyl-tRNA molecules trapped in stalled 50S ribosomal subunits, and thus maintains levels of free tRNAs and 50S ribosomes. The chain is Peptidyl-tRNA hydrolase from Wolbachia sp. subsp. Brugia malayi (strain TRS).